Consider the following 112-residue polypeptide: Protein FAM32A (112 aa).

The interval 15 to 35 (KGCGDMSLGKKKKKKNKANDQ) is disordered.

The protein belongs to the FAM32 family.

It is found in the nucleus. In terms of biological role, may induce G2 arrest and apoptosis. May also increase cell sensitivity to apoptotic stimuli. The protein is Protein FAM32A (fam32a) of Xenopus tropicalis (Western clawed frog).